The following is a 331-amino-acid chain: Cytoplasmic envelopment protein 1 (331 aa).

Belongs to the herpesviridae cytoplasmic envelopment protein 1 family. As to quaternary structure, interacts with protein ORF7; this interaction localizes protein ORF53 to the host trans-Golgi network (TGN).

It localises to the virion. The protein localises to the virion tegument. Its subcellular location is the host cytoplasm. The protein resides in the host Golgi apparatus. Plays a critical role in cytoplasmic virus egress. Participates in the final step of tegumentation and envelope acquisition within the host cytoplasm. The sequence is that of Cytoplasmic envelopment protein 1 (ORF53) from Varicella-zoster virus (strain Dumas) (HHV-3).